Reading from the N-terminus, the 421-residue chain is Gamma-glutamyl phosphate reductase (421 aa).

The protein belongs to the gamma-glutamyl phosphate reductase family.

It localises to the cytoplasm. The catalysed reaction is L-glutamate 5-semialdehyde + phosphate + NADP(+) = L-glutamyl 5-phosphate + NADPH + H(+). It participates in amino-acid biosynthesis; L-proline biosynthesis; L-glutamate 5-semialdehyde from L-glutamate: step 2/2. In terms of biological role, catalyzes the NADPH-dependent reduction of L-glutamate 5-phosphate into L-glutamate 5-semialdehyde and phosphate. The product spontaneously undergoes cyclization to form 1-pyrroline-5-carboxylate. The protein is Gamma-glutamyl phosphate reductase of Stutzerimonas stutzeri (strain A1501) (Pseudomonas stutzeri).